Here is a 202-residue protein sequence, read N- to C-terminus: GTP cyclohydrolase 1 (202 aa).

Zn(2+) contacts are provided by Cys90, His93, and Cys163.

This sequence belongs to the GTP cyclohydrolase I family. As to quaternary structure, homomer.

It catalyses the reaction GTP + H2O = 7,8-dihydroneopterin 3'-triphosphate + formate + H(+). It participates in cofactor biosynthesis; 7,8-dihydroneopterin triphosphate biosynthesis; 7,8-dihydroneopterin triphosphate from GTP: step 1/1. In Mycobacterium ulcerans (strain Agy99), this protein is GTP cyclohydrolase 1.